The chain runs to 1128 residues: Apoptosis-stimulating of p53 protein 2 (1128 aa).

Residues 85-120 form a disordered region; it reads PPNRDIVSGPRSQDPSVKRNGVKVPGEHRRKENGVN. Residues 332–348 are interaction with APPBP1; that stretch reads NLPQQAVSAPSRVAAVG. The segment at 393–436 is disordered; sequence MRSGAASQSKGSKAHPASPDWNPSNADLLPSQGSSVPQSAGTAL. Residues 413–433 are compositionally biased toward polar residues; the sequence is WNPSNADLLPSQGSSVPQSAG. Phosphoserine is present on residues Ser479, Ser555, Ser568, Ser571, and Ser575. Disordered stretches follow at residues 549 to 596 and 654 to 705; these read QARM…FPPA and NPQQ…LPFL. A compositionally biased stretch (polar residues) spans 562-574; the sequence is GQDQVLSPASKQE. Over residues 654 to 669 the composition is skewed to polar residues; the sequence is NPQQHPENIYSCSQGK. Residues 684–693 show a composition bias toward basic and acidic residues; it reads HESHENERIP. Residues Ser697, Ser713, and Ser736 each carry the phosphoserine modification. Disordered stretches follow at residues 723 to 748, 802 to 824, and 870 to 907; these read KLSNAPRPLKKRSSITEPEGPNGPNI, SLVPEPLSPEDMGSASTENSDVP, and PPPPYPSGEPEVSEEDSARMRPPEITGQVSLPPGKRTN. Positions 866–875 match the SH3-binding motif; it reads YPPYPPPPYP. The interval 876 to 1128 is mediates interaction with APC2; that stretch reads SGEPEVSEED…RIKPRQRSLA (253 aa). ANK repeat units lie at residues 958 to 987 and 991 to 1020; these read EGITALHNAVCAGHTEIVKFLVQFGVNVNA and DGWTPLHCAASCNNVQVCKFLVESGAAVFA. The region spanning 1057 to 1119 is the SH3 domain; the sequence is MNKGVIYALW…PRNLLGLYPR (63 aa).

It belongs to the ASPP family. In terms of assembly, interacts with P53/TP53; the interaction promotes pro-apoptotic activity. Interacts with BCL2. Interacts with protein phosphatase 1. Interacts with RELA NF-kappa-B subunit. This interaction probably prevents the activation of apoptosis, possibly by preventing its interaction with p53/TP53. Interacts with APC2 and APPBP1. Interacts with DDX42 (via the C-terminus); the interaction is not inhibited by TP53BP2 ubiquitination and is independent of p53/TP53.

Its subcellular location is the cytoplasm. It is found in the perinuclear region. It localises to the nucleus. In terms of biological role, regulator that plays a central role in regulation of apoptosis and cell growth via its interactions with proteins such as TP53. Regulates p53/TP53 by enhancing the DNA binding and transactivation function of p53/TP53 on the promoters of proapoptotic genes in vivo. Inhibits the ability of APPBP1 to conjugate NEDD8 to CUL1, and thereby decreases APPBP1 ability to induce apoptosis. Impedes cell cycle progression at G2/M. Its apoptosis-stimulating activity is inhibited by its interaction with DDX42. The sequence is that of Apoptosis-stimulating of p53 protein 2 (Tp53bp2) from Mus musculus (Mouse).